The chain runs to 334 residues: L-lactate dehydrogenase B chain (334 aa).

30 to 58 (GQVGMACAVSVLLKELADELALVDILEDK) contacts NAD(+). Residues R107, N139, and R170 each coordinate substrate. N139 is a binding site for NAD(+). H194 acts as the Proton acceptor in catalysis. T249 serves as a coordination point for substrate.

Belongs to the LDH/MDH superfamily. LDH family. In terms of assembly, homotetramer.

Its subcellular location is the cytoplasm. The catalysed reaction is (S)-lactate + NAD(+) = pyruvate + NADH + H(+). The protein operates within fermentation; pyruvate fermentation to lactate; (S)-lactate from pyruvate: step 1/1. In terms of biological role, interconverts simultaneously and stereospecifically pyruvate and lactate with concomitant interconversion of NADH and NAD(+). This Xenopus laevis (African clawed frog) protein is L-lactate dehydrogenase B chain (ldhb).